The sequence spans 471 residues: Argininosuccinate lyase (471 aa).

Belongs to the lyase 1 family. Argininosuccinate lyase subfamily.

The protein localises to the cytoplasm. The enzyme catalyses 2-(N(omega)-L-arginino)succinate = fumarate + L-arginine. It participates in amino-acid biosynthesis; L-arginine biosynthesis; L-arginine from L-ornithine and carbamoyl phosphate: step 3/3. The polypeptide is Argininosuccinate lyase (Parasynechococcus marenigrum (strain WH8102)).